A 666-amino-acid chain; its full sequence is MAMYLKSQAVLTLIPQRYHALARKSNAGRRCSLTPNSATASQFFQKAASSTSTKPPGPSDADVRSPASPSSRSSLRPESIPKPPQSPPVQGQTSPGSEVLPPDHESSTPPPPPPPPQGPKSSRLRKLLYLFLTAGLAYAGGVWYSLRSDNFYDFFTEYIPYGEEAVLYLEERDFRNRFPHVTKQINRRVTVPKDEGAQVTIPSGSGLSWKVAEEQQEATDMTKKGRRMGTAHANEPTKDIKVAEKAKEEVKSKSAAKKEDVAANIPIQEDLEPQPAKAEERNLDAPRQPAVPAATTIERLVQDKVDEPVVQDLVKVFNDVISVISADESASKFAGPIAKAKEELQRIGDRIVALKKDAQESAQEEIRNAHAAFDKSAAELIRRIDEVRTQDAAEFREEFESEREKIARSYQEKVNTELQRAHEVAEQRLRNELVEQAIELNRKFLSDVKTLVENEREGRLSKLAELTANVAELERLTAGWSDVVDINLKTQQLQVAVDAVRTTLENSDVPRPFVRELAAVKELASNDEVVAAAIASISPAAYQRGIPSAAQLVERFRRVASEVRKASLLPENAGITSHAASLVLSKVMLKKQGLPTGDDVESILTRTENFLEEGNFDEAAREMNSLQGWAKLLSKDWLADVRQVLEVKQALEIIETEARLRCLQVE.

The transit peptide at 1–19 (MAMYLKSQAVLTLIPQRYH) directs the protein to the mitochondrion. Residues 20–126 (ALARKSNAGR…QGPKSSRLRK (107 aa)) are Mitochondrial matrix-facing. A disordered region spans residues 25 to 122 (SNAGRRCSLT…PPPPQGPKSS (98 aa)). The segment covering 33 to 54 (LTPNSATASQFFQKAASSTSTK) has biased composition (polar residues). Positions 64–78 (RSPASPSSRSSLRPE) are enriched in low complexity. Positions 108–118 (TPPPPPPPPQG) are enriched in pro residues. A helical transmembrane segment spans residues 127–146 (LLYLFLTAGLAYAGGVWYSL). Topologically, residues 147–666 (RSDNFYDFFT…EARLRCLQVE (520 aa)) are mitochondrial intermembrane. The segment covering 251–261 (KSKSAAKKEDV) has biased composition (basic and acidic residues). Positions 251 to 287 (KSKSAAKKEDVAANIPIQEDLEPQPAKAEERNLDAPR) are disordered. Residues 337-482 (IAKAKEELQR…LERLTAGWSD (146 aa)) are a coiled coil.

It belongs to the MICOS complex subunit Mic60 family. In terms of assembly, component of the mitochondrial contact site and cristae organizing system (MICOS) complex.

Its subcellular location is the mitochondrion inner membrane. Functionally, component of the MICOS complex, a large protein complex of the mitochondrial inner membrane that plays crucial roles in the maintenance of crista junctions, inner membrane architecture, and formation of contact sites to the outer membrane. Plays a role in keeping cristae membranes connected to the inner boundary membrane. Also promotes protein import via the mitochondrial intermembrane space assembly (MIA) pathway. The polypeptide is MICOS complex subunit MIC60 (MIC60) (Ajellomyces capsulatus (strain NAm1 / WU24) (Darling's disease fungus)).